Reading from the N-terminus, the 961-residue chain is Alanine--tRNA ligase, chloroplastic/mitochondrial (961 aa).

Zn(2+)-binding residues include histidine 641, histidine 645, cysteine 743, and histidine 747.

Belongs to the class-II aminoacyl-tRNA synthetase family. In terms of assembly, monomer. Zn(2+) serves as cofactor.

The protein localises to the plastid. It localises to the chloroplast. Its subcellular location is the mitochondrion. It catalyses the reaction tRNA(Ala) + L-alanine + ATP = L-alanyl-tRNA(Ala) + AMP + diphosphate. Its function is as follows. Catalyzes the attachment of alanine to tRNA(Ala) in a two-step reaction: alanine is first activated by ATP to form Ala-AMP and then transferred to the acceptor end of tRNA(Ala). Also edits incorrectly charged tRNA(Ala) via its editing domain. This is Alanine--tRNA ligase, chloroplastic/mitochondrial from Sorghum bicolor (Sorghum).